We begin with the raw amino-acid sequence, 344 residues long: tRNA dimethylallyltransferase (344 aa).

43–50 contacts ATP; the sequence is GPTCCGKS. Residue 45-50 participates in substrate binding; that stretch reads TCCGKS. The tract at residues 68 to 71 is interaction with substrate tRNA; the sequence is DSMQ.

It belongs to the IPP transferase family. In terms of assembly, monomer. Requires Mg(2+) as cofactor.

It catalyses the reaction adenosine(37) in tRNA + dimethylallyl diphosphate = N(6)-dimethylallyladenosine(37) in tRNA + diphosphate. Functionally, catalyzes the transfer of a dimethylallyl group onto the adenine at position 37 in tRNAs that read codons beginning with uridine, leading to the formation of N6-(dimethylallyl)adenosine (i(6)A). The sequence is that of tRNA dimethylallyltransferase from Protochlamydia amoebophila (strain UWE25).